Consider the following 116-residue polypeptide: Large ribosomal subunit protein bL17 (116 aa).

Belongs to the bacterial ribosomal protein bL17 family. As to quaternary structure, part of the 50S ribosomal subunit. Contacts protein L32.

This chain is Large ribosomal subunit protein bL17, found in Gloeothece citriformis (strain PCC 7424) (Cyanothece sp. (strain PCC 7424)).